The following is a 122-amino-acid chain: Small ribosomal subunit protein uS13 (122 aa).

Positions Val-98–Thr-116 are enriched in basic residues. Residues Val-98–Lys-122 are disordered.

The protein belongs to the universal ribosomal protein uS13 family. In terms of assembly, part of the 30S ribosomal subunit. Forms a loose heterodimer with protein S19. Forms two bridges to the 50S subunit in the 70S ribosome.

Functionally, located at the top of the head of the 30S subunit, it contacts several helices of the 16S rRNA. In the 70S ribosome it contacts the 23S rRNA (bridge B1a) and protein L5 of the 50S subunit (bridge B1b), connecting the 2 subunits; these bridges are implicated in subunit movement. Contacts the tRNAs in the A and P-sites. In Campylobacter fetus subsp. fetus (strain 82-40), this protein is Small ribosomal subunit protein uS13.